The chain runs to 156 residues: ATP synthase subunit b (156 aa).

The chain crosses the membrane as a helical span at residues L11–N31.

Belongs to the ATPase B chain family. F-type ATPases have 2 components, F(1) - the catalytic core - and F(0) - the membrane proton channel. F(1) has five subunits: alpha(3), beta(3), gamma(1), delta(1), epsilon(1). F(0) has three main subunits: a(1), b(2) and c(10-14). The alpha and beta chains form an alternating ring which encloses part of the gamma chain. F(1) is attached to F(0) by a central stalk formed by the gamma and epsilon chains, while a peripheral stalk is formed by the delta and b chains.

The protein resides in the cell inner membrane. F(1)F(0) ATP synthase produces ATP from ADP in the presence of a proton or sodium gradient. F-type ATPases consist of two structural domains, F(1) containing the extramembraneous catalytic core and F(0) containing the membrane proton channel, linked together by a central stalk and a peripheral stalk. During catalysis, ATP synthesis in the catalytic domain of F(1) is coupled via a rotary mechanism of the central stalk subunits to proton translocation. In terms of biological role, component of the F(0) channel, it forms part of the peripheral stalk, linking F(1) to F(0). This chain is ATP synthase subunit b, found in Haemophilus influenzae (strain PittEE).